The primary structure comprises 428 residues: Cytochrome c biogenesis protein CcsB (428 aa).

Transmembrane regions (helical) follow at residues 14–34 (LRFA…GTFI), 72–92 (SNWF…CSFR), and 162–182 (LGPI…AYGN).

The protein belongs to the Ccs1/CcsB family. As to quaternary structure, may interact with CcsA.

It is found in the cellular thylakoid membrane. In terms of biological role, required during biogenesis of c-type cytochromes (cytochrome c6 and cytochrome f) at the step of heme attachment. This Prochlorococcus marinus subsp. pastoris (strain CCMP1986 / NIES-2087 / MED4) protein is Cytochrome c biogenesis protein CcsB.